Consider the following 362-residue polypeptide: Peptide chain release factor 1 (362 aa).

At glutamine 232 the chain carries N5-methylglutamine.

The protein belongs to the prokaryotic/mitochondrial release factor family. Methylated by PrmC. Methylation increases the termination efficiency of RF1.

The protein localises to the cytoplasm. Its function is as follows. Peptide chain release factor 1 directs the termination of translation in response to the peptide chain termination codons UAG and UAA. The protein is Peptide chain release factor 1 of Myxococcus xanthus.